We begin with the raw amino-acid sequence, 330 residues long: Atypical chemokine receptor 1 (330 aa).

Topologically, residues 1 to 57 (MGNCLYPVADDNSTKLAIKEDFLIDFPEDYYPDYNETDVEAAAPCHSCSLLNYSSLP) are extracellular. N-linked (GlcNAc...) asparagine glycans are attached at residues Asn12, Asn35, and Asn52. 2 disulfide bridges follow: Cys45/Cys270 and Cys123/Cys189. The chain crosses the membrane as a helical span at residues 58–78 (FFILVSILGILASGTILYALL). Residues 79–89 (RPLFRWQLYQD) are Cytoplasmic-facing. A helical transmembrane segment spans residues 90 to 110 (RSTLVQLAVGSALFSIVVPIL). Over 111–123 (ARGLSGALITSLC) the chain is Extracellular. Residues 124–147 (HLAHLVAYGSAFAQALLIGYHACL) form a helical membrane-spanning segment. Residues 148–160 (GPQLGAGQVPGLR) lie on the Cytoplasmic side of the membrane. The chain crosses the membrane as a helical span at residues 161–181 (LGVTVGLWGVAALLSLPVVLG). The Extracellular segment spans residues 182 to 201 (SDTSQGLCTVTFSGEWETLR). Residues 202–222 (YIHAAACFAIFVLLPLGLLGT) traverse the membrane as a helical segment. At 223–238 (KGLKTVLGRAPCPWVD) the chain is on the cytoplasmic side. The helical transmembrane segment at 239–259 (VLWVWFIFWWPQGMTLGLDSL) threads the bilayer. Over 260-281 (VRSKAIVVSTCPAQQALDMLLD) the chain is Extracellular. A helical membrane pass occupies residues 282-302 (VAEALAILHCVATPLLLAWVC). Residues 303–330 (YQATHTSPPSLPLPTTQTSHLDTLGGKS) are Cytoplasmic-facing.

This sequence belongs to the G-protein coupled receptor 1 family. Atypical chemokine receptor subfamily.

The protein localises to the early endosome. The protein resides in the recycling endosome. Its subcellular location is the membrane. Functionally, atypical chemokine receptor that controls chemokine levels and localization via high-affinity chemokine binding that is uncoupled from classic ligand-driven signal transduction cascades, resulting instead in chemokine sequestration, degradation, or transcytosis. Also known as interceptor (internalizing receptor) or chemokine-scavenging receptor or chemokine decoy receptor. Has a promiscuous chemokine-binding profile, interacting with inflammatory chemokines of both the CXC and the CC subfamilies but not with homeostatic chemokines. Acts as a receptor for chemokines including CCL2, CCL5, CCL7, CCL11, CCL13, CCL14, CCL17, CXCL5, CXCL6, IL8/CXCL8, CXCL11, GRO, RANTES, MCP-1 and TARC. May regulate chemokine bioavailability and, consequently, leukocyte recruitment through two distinct mechanisms: when expressed in endothelial cells, it sustains the abluminal to luminal transcytosis of tissue-derived chemokines and their subsequent presentation to circulating leukocytes; when expressed in erythrocytes, serves as blood reservoir of cognate chemokines but also as a chemokine sink, buffering potential surges in plasma chemokine levels. The protein is Atypical chemokine receptor 1 (ACKR1) of Bos taurus (Bovine).